The chain runs to 353 residues: Photosystem II D2 protein (353 aa).

Thr-2 is subject to N-acetylthreonine. At Thr-2 the chain carries Phosphothreonine. The helical transmembrane segment at 41–61 (CAYFALGGWFTGTTFVTSWYT) threads the bilayer. His-118 serves as a coordination point for chlorophyll a. Residues 125 to 141 (GFMLRQFELARSVQLRP) form a helical membrane-spanning segment. Residues Gln-130 and Asn-143 each coordinate pheophytin a. A helical membrane pass occupies residues 153 to 166 (VFVSVSLIYPLGQA). Residue His-198 coordinates chlorophyll a. Residues 208–228 (AALLCAIHGATVENTLFEDGD) traverse the membrane as a helical segment. A plastoquinone-binding residues include His-215 and Phe-262. His-215 serves as a coordination point for Fe cation. His-269 contacts Fe cation. The helical transmembrane segment at 279–295 (GLWMSAIGVVGLALNLR) threads the bilayer.

The protein belongs to the reaction center PufL/M/PsbA/D family. As to quaternary structure, PSII is composed of 1 copy each of membrane proteins PsbA, PsbB, PsbC, PsbD, PsbE, PsbF, PsbH, PsbI, PsbJ, PsbK, PsbL, PsbM, PsbT, PsbX, PsbY, PsbZ, Psb30/Ycf12, at least 3 peripheral proteins of the oxygen-evolving complex and a large number of cofactors. It forms dimeric complexes. Requires The D1/D2 heterodimer binds P680, chlorophylls that are the primary electron donor of PSII, and subsequent electron acceptors. It shares a non-heme iron and each subunit binds pheophytin, quinone, additional chlorophylls, carotenoids and lipids. There is also a Cl(-1) ion associated with D1 and D2, which is required for oxygen evolution. The PSII complex binds additional chlorophylls, carotenoids and specific lipids. as cofactor.

It is found in the plastid. The protein localises to the chloroplast thylakoid membrane. It catalyses the reaction 2 a plastoquinone + 4 hnu + 2 H2O = 2 a plastoquinol + O2. In terms of biological role, photosystem II (PSII) is a light-driven water:plastoquinone oxidoreductase that uses light energy to abstract electrons from H(2)O, generating O(2) and a proton gradient subsequently used for ATP formation. It consists of a core antenna complex that captures photons, and an electron transfer chain that converts photonic excitation into a charge separation. The D1/D2 (PsbA/PsbD) reaction center heterodimer binds P680, the primary electron donor of PSII as well as several subsequent electron acceptors. D2 is needed for assembly of a stable PSII complex. This chain is Photosystem II D2 protein, found in Angiopteris evecta (Mule's foot fern).